Reading from the N-terminus, the 401-residue chain is Argininosuccinate synthase (401 aa).

ATP is bound at residue 10–18 (AYSGGVDTS). Y89 is an L-citrulline binding site. G119 is a binding site for ATP. L-aspartate contacts are provided by T121, N125, and D126. Residue N125 participates in L-citrulline binding. Positions 129, 177, 186, 262, and 274 each coordinate L-citrulline.

The protein belongs to the argininosuccinate synthase family. Type 1 subfamily. In terms of assembly, homotetramer.

The protein resides in the cytoplasm. The enzyme catalyses L-citrulline + L-aspartate + ATP = 2-(N(omega)-L-arginino)succinate + AMP + diphosphate + H(+). It functions in the pathway amino-acid biosynthesis; L-arginine biosynthesis; L-arginine from L-ornithine and carbamoyl phosphate: step 2/3. The sequence is that of Argininosuccinate synthase from Thermosynechococcus vestitus (strain NIES-2133 / IAM M-273 / BP-1).